The primary structure comprises 102 residues: Large ribosomal subunit protein bL21 (102 aa).

Belongs to the bacterial ribosomal protein bL21 family. In terms of assembly, part of the 50S ribosomal subunit. Contacts protein L20.

In terms of biological role, this protein binds to 23S rRNA in the presence of protein L20. This chain is Large ribosomal subunit protein bL21, found in Onion yellows phytoplasma (strain OY-M).